Reading from the N-terminus, the 299-residue chain is MSFKSGFVAILGRPNVGKSTFLNHVMGQKIAIMSDKAQTTRNKIMGIYTTDKEQIVFIDTPGIHKPKTALGDFMVESAYSTLREVDTVLFMVPADEKRGKGDDMIMERLKNAKIPVILVINKIDKVHPDQLLEQIDDFRSQMDFKEVVPISALQGNNVPTLISLLTDNLEEGFQYFPEDQITDHPERFLVSEMIREKVLHLTQQEIPHSVAVVIESMKRDQVTDKVHIRATIMVERDSQKGIIIGKQGSMLKKIGQMARRDIELMLGDKVYLETWVKVKKNWRDKKLDLADFGYNQKEY.

The 168-residue stretch at 4-171 folds into the Era-type G domain; the sequence is KSGFVAILGR…ISLLTDNLEE (168 aa). The segment at 12–19 is G1; it reads GRPNVGKS. 12–19 lines the GTP pocket; it reads GRPNVGKS. The interval 38-42 is G2; it reads QTTRN. Positions 59–62 are G3; the sequence is DTPG. GTP contacts are provided by residues 59-63 and 121-124; these read DTPGI and NKID. The G4 stretch occupies residues 121–124; that stretch reads NKID. Residues 150 to 152 are G5; that stretch reads ISA. Positions 202-280 constitute a KH type-2 domain; that stretch reads TQQEIPHSVA…YLETWVKVKK (79 aa).

The protein belongs to the TRAFAC class TrmE-Era-EngA-EngB-Septin-like GTPase superfamily. Era GTPase family. In terms of assembly, monomer.

The protein resides in the cytoplasm. It localises to the cell membrane. In terms of biological role, an essential GTPase that binds both GDP and GTP, with rapid nucleotide exchange. Plays a role in 16S rRNA processing and 30S ribosomal subunit biogenesis and possibly also in cell cycle regulation and energy metabolism. This chain is GTPase Era, found in Streptococcus uberis (strain ATCC BAA-854 / 0140J).